The chain runs to 262 residues: Thiazole synthase (262 aa).

Lys-105 acts as the Schiff-base intermediate with DXP in catalysis. Residues Gly-166, 192-193, and 214-215 contribute to the 1-deoxy-D-xylulose 5-phosphate site; these read AG and NT.

Belongs to the ThiG family. Homotetramer. Forms heterodimers with either ThiH or ThiS.

The protein resides in the cytoplasm. The catalysed reaction is [ThiS sulfur-carrier protein]-C-terminal-Gly-aminoethanethioate + 2-iminoacetate + 1-deoxy-D-xylulose 5-phosphate = [ThiS sulfur-carrier protein]-C-terminal Gly-Gly + 2-[(2R,5Z)-2-carboxy-4-methylthiazol-5(2H)-ylidene]ethyl phosphate + 2 H2O + H(+). It functions in the pathway cofactor biosynthesis; thiamine diphosphate biosynthesis. Catalyzes the rearrangement of 1-deoxy-D-xylulose 5-phosphate (DXP) to produce the thiazole phosphate moiety of thiamine. Sulfur is provided by the thiocarboxylate moiety of the carrier protein ThiS. In vitro, sulfur can be provided by H(2)S. This chain is Thiazole synthase, found in Phenylobacterium zucineum (strain HLK1).